A 203-amino-acid polypeptide reads, in one-letter code: E3 ubiquitin-protein ligase RNF152 (203 aa).

An RING-type zinc finger spans residues 12-55 (CQICFNYYSPRRRPKLLDCKHTCCSVCLQQMRTSQKDVRCPWCR). Residues 106-165 (ISKERALLPGDMGCRLLPGSQQKSVTVVTVPAEQRPLQGGAPQEAVEEEPDRRGVAKSST) are necessary for interaction with RRAGA. A helical membrane pass occupies residues 167–187 (SGVCTVILVACVLVFLLGIVL).

It belongs to the RNF152 family. As to quaternary structure, interacts with RRAGA (inactive GDP-bound form); stimulated by amino acid starvation. In terms of processing, ubiquitinated. Autoubiquitinated in vitro, leading to its degradation by the proteasome.

It localises to the lysosome membrane. The enzyme catalyses S-ubiquitinyl-[E2 ubiquitin-conjugating enzyme]-L-cysteine + [acceptor protein]-L-lysine = [E2 ubiquitin-conjugating enzyme]-L-cysteine + N(6)-ubiquitinyl-[acceptor protein]-L-lysine.. It participates in protein modification; protein ubiquitination. Its function is as follows. E3 ubiquitin-protein ligase that acts as a negative regulator of mTORC1 signaling by mediating ubiquitination of RagA/RRAGA and RHEB. Catalyzes 'Lys-63'-linked polyubiquitination of RagA/RRAGA in response to amino acid starvation, thereby regulating mTORC1 signaling. Also mediates monoubiquitination of RHEB, promoting its association with the TSC-TBC complex and subsequent inhibition. Also mediates 'Lys-48'-linked polyubiquitination of target proteins and their subsequent targeting to the proteasome for degradation. Induces apoptosis when overexpressed. In Ailuropoda melanoleuca (Giant panda), this protein is E3 ubiquitin-protein ligase RNF152.